The primary structure comprises 182 residues: Large ribosomal subunit protein uL10 (182 aa).

It belongs to the universal ribosomal protein uL10 family. As to quaternary structure, part of the ribosomal stalk of the 50S ribosomal subunit. The N-terminus interacts with L11 and the large rRNA to form the base of the stalk. The C-terminus forms an elongated spine to which L12 dimers bind in a sequential fashion forming a multimeric L10(L12)X complex.

Its function is as follows. Forms part of the ribosomal stalk, playing a central role in the interaction of the ribosome with GTP-bound translation factors. This Gluconacetobacter diazotrophicus (strain ATCC 49037 / DSM 5601 / CCUG 37298 / CIP 103539 / LMG 7603 / PAl5) protein is Large ribosomal subunit protein uL10.